Consider the following 884-residue polypeptide: Formin-like protein 9 (884 aa).

Residues 1 to 19 (MGMAMRCVLVLFSVSPVLL) form the signal peptide. Residues 140–160 (IVALGVVGLCLVVLGVVIAAF) traverse the membrane as a helical segment. Disordered regions lie at residues 179–204 (FHHG…PDPL), 295–318 (THDS…LSPK), and 403–473 (TMTN…PLPR). Over residues 300–310 (SDSSYQSLSPD) the composition is skewed to low complexity. Pro residues predominate over residues 429 to 443 (KPAPPPPPQKNPPPN). The 421-residue stretch at 464-884 (VGKDGSPLPR…QTLNLVLPLK (421 aa)) folds into the FH2 domain.

The protein belongs to the formin-like family. Class-I subfamily.

The protein localises to the membrane. In Oryza sativa subsp. indica (Rice), this protein is Formin-like protein 9 (FH9).